The primary structure comprises 220 residues: Ribosome biogenesis protein 15 (220 aa).

A disordered region spans residues M1–D82. Basic and acidic residues predominate over residues S9 to L30. Residues S39–Q60 show a composition bias toward acidic residues. Positions G91 to K169 constitute an RRM domain.

As to quaternary structure, component of the pre-66S ribosomal particle. Interacts with NOP7 and RRP1.

It is found in the cytoplasm. It localises to the nucleus. The protein resides in the nucleolus. In terms of biological role, involved in the biogenesis of the 60S ribosomal subunit. Required for pre-rRNA processing and cytokinesis. Associates with the precursors of the 25S and 5.8S rRNAs. The protein is Ribosome biogenesis protein 15 of Saccharomyces cerevisiae (strain ATCC 204508 / S288c) (Baker's yeast).